Reading from the N-terminus, the 331-residue chain is Adenosine deaminase (331 aa).

Residues His12 and His14 each contribute to the Zn(2+) site. Residues His14, Asp16, and Gly170 each coordinate substrate. Zn(2+) is bound at residue His197. Glu200 (proton donor) is an active-site residue. Residue Asp278 coordinates Zn(2+).

This sequence belongs to the metallo-dependent hydrolases superfamily. Adenosine and AMP deaminases family. Adenosine deaminase subfamily. Requires Zn(2+) as cofactor.

The enzyme catalyses adenosine + H2O + H(+) = inosine + NH4(+). It carries out the reaction 2'-deoxyadenosine + H2O + H(+) = 2'-deoxyinosine + NH4(+). Catalyzes the hydrolytic deamination of adenosine and 2-deoxyadenosine. This Vibrio vulnificus (strain YJ016) protein is Adenosine deaminase.